The chain runs to 279 residues: Probable endonuclease 4 (279 aa).

Zn(2+)-binding residues include His69, His109, Glu145, Asp179, His182, His216, Asp229, His231, and Glu261.

It belongs to the AP endonuclease 2 family. Requires Zn(2+) as cofactor.

The enzyme catalyses Endonucleolytic cleavage to 5'-phosphooligonucleotide end-products.. Its function is as follows. Endonuclease IV plays a role in DNA repair. It cleaves phosphodiester bonds at apurinic or apyrimidinic (AP) sites, generating a 3'-hydroxyl group and a 5'-terminal sugar phosphate. This chain is Probable endonuclease 4, found in Desulforapulum autotrophicum (strain ATCC 43914 / DSM 3382 / VKM B-1955 / HRM2) (Desulfobacterium autotrophicum).